The chain runs to 329 residues: Deoxynucleotidyltransferase terminal-interacting protein 1 (329 aa).

Disordered stretches follow at residues 1-22 (MGAT…GGLE) and 147-178 (KRGR…ILSS). Residues 56–147 (MTTSFTDPAI…RLTHELPGIK (92 aa)) are important for dimerization. The segment covering 147-158 (KRGRQAEEECAH) has biased composition (basic and acidic residues). The segment at residues 159–173 (RGSPLPKKRKGRPPG) is a DNA-binding region (a.T hook). Serine 161 carries the phosphoserine modification. The Nuclear localization signal signature appears at 164–170 (PKKRKGR). The tract at residues 197-316 (REGPKWDPAR…MRKYMETLRT (120 aa)) is important for DNA and nucleosome binding. The H-T-H motif DNA-binding region spans 216 to 237 (GSRANKALGMGGTRGRIYIKHP).

Monomer and homodimer. A minor proportion may form homotrimers. Interacts with ZNF541. Interacts with the terminal deoxynucleotidyltransferase DNTT. Interacts with TRERF1. Identified in a histone deacetylase complex that contains DNTTIP1, HDAC1 and MIDEAS; this complex assembles into a tetramer that contains four copies of each protein chain. Component of a histone deacetylase complex containing DNTTIP1, ZNF541, HDAC1 and HDAC2. Identified in a complex with KCTD19, HDAC1, HDAC2 and ZNF541.

It is found in the nucleus. Its function is as follows. Increases DNTT terminal deoxynucleotidyltransferase activity (in vitro). Also acts as a transcriptional regulator, binding to the consensus sequence 5'-GNTGCATG-3' following an AT-tract. Associates with RAB20 promoter and positively regulates its transcription. Binds DNA and nucleosomes; may recruit HDAC1 complexes to nucleosomes or naked DNA. The protein is Deoxynucleotidyltransferase terminal-interacting protein 1 (DNTTIP1) of Pongo abelii (Sumatran orangutan).